Reading from the N-terminus, the 226-residue chain is Endonuclease NucS (226 aa).

Belongs to the NucS endonuclease family.

It localises to the cytoplasm. Cleaves both 3' and 5' ssDNA extremities of branched DNA structures. This Mycobacterium tuberculosis (strain CDC 1551 / Oshkosh) protein is Endonuclease NucS.